Reading from the N-terminus, the 261-residue chain is tRNA pseudouridine synthase A (261 aa).

The Nucleophile role is filled by D55. Y114 is a substrate binding site.

The protein belongs to the tRNA pseudouridine synthase TruA family. As to quaternary structure, homodimer.

The enzyme catalyses uridine(38/39/40) in tRNA = pseudouridine(38/39/40) in tRNA. Its function is as follows. Formation of pseudouridine at positions 38, 39 and 40 in the anticodon stem and loop of transfer RNAs. This chain is tRNA pseudouridine synthase A, found in Paracoccus denitrificans (strain Pd 1222).